The chain runs to 286 residues: Bifunctional protein FolD (286 aa).

Residues Gly166–Ser168, Ser191, and Ile232 each bind NADP(+).

It belongs to the tetrahydrofolate dehydrogenase/cyclohydrolase family. In terms of assembly, homodimer.

The enzyme catalyses (6R)-5,10-methylene-5,6,7,8-tetrahydrofolate + NADP(+) = (6R)-5,10-methenyltetrahydrofolate + NADPH. The catalysed reaction is (6R)-5,10-methenyltetrahydrofolate + H2O = (6R)-10-formyltetrahydrofolate + H(+). The protein operates within one-carbon metabolism; tetrahydrofolate interconversion. Its function is as follows. Catalyzes the oxidation of 5,10-methylenetetrahydrofolate to 5,10-methenyltetrahydrofolate and then the hydrolysis of 5,10-methenyltetrahydrofolate to 10-formyltetrahydrofolate. The chain is Bifunctional protein FolD from Herpetosiphon aurantiacus (strain ATCC 23779 / DSM 785 / 114-95).